The chain runs to 811 residues: Elongation factor G, mitochondrial (811 aa).

Residues 1–64 (MSAIARAAAR…FQQSFQRRWA (64 aa)) constitute a mitochondrion transit peptide. Residues 96 to 394 (RRQRNVGISA…GVCAYLPNPS (299 aa)) enclose the tr-type G domain. GTP contacts are provided by residues 105–112 (AHIDSGKT), 192–196 (DTPGH), and 246–249 (NKMD).

It belongs to the TRAFAC class translation factor GTPase superfamily. Classic translation factor GTPase family. EF-G/EF-2 subfamily.

Its subcellular location is the mitochondrion. Its pathway is protein biosynthesis; polypeptide chain elongation. Mitochondrial GTPase that catalyzes the GTP-dependent ribosomal translocation step during translation elongation. During this step, the ribosome changes from the pre-translocational (PRE) to the post-translocational (POST) state as the newly formed A-site-bound peptidyl-tRNA and P-site-bound deacylated tRNA move to the P and E sites, respectively. Catalyzes the coordinated movement of the two tRNA molecules, the mRNA and conformational changes in the ribosome. The protein is Elongation factor G, mitochondrial of Cryptococcus neoformans var. neoformans serotype D (strain JEC21 / ATCC MYA-565) (Filobasidiella neoformans).